The sequence spans 451 residues: Phosphoglucosamine mutase (451 aa).

The active-site Phosphoserine intermediate is serine 103. Mg(2+)-binding residues include serine 103, aspartate 243, aspartate 245, and aspartate 247. Position 103 is a phosphoserine (serine 103).

This sequence belongs to the phosphohexose mutase family. Requires Mg(2+) as cofactor. Post-translationally, activated by phosphorylation.

The enzyme catalyses alpha-D-glucosamine 1-phosphate = D-glucosamine 6-phosphate. Catalyzes the conversion of glucosamine-6-phosphate to glucosamine-1-phosphate. In Lactobacillus gasseri (strain ATCC 33323 / DSM 20243 / BCRC 14619 / CIP 102991 / JCM 1131 / KCTC 3163 / NCIMB 11718 / NCTC 13722 / AM63), this protein is Phosphoglucosamine mutase.